The primary structure comprises 594 residues: MAQTSASQGYIDDSSSFDSFHLDSRLSQAIRSIGFKHPTLIQSSAIPLALQEKRDIIAKASTGSGKTLAYLIPVIQTILDHKKADQNDEGATLGVILVPTRELAQQVLEVVEKLIVFCSQEIKCLNLSSGNVSGNLLKSLLTENPEILIATPAKLVDLLDAQDVNIDRLKFLVIDEVDLVLTFGYQEDLTKISERLPLRKSLQTFLMSATLNDDIQHLKQQFCRSPAILKLNDDEVNKDQTKLIQYYVKVGEFDKFLLCYVIFKLGLIKGKTLIFVNNIDRGYRLKLVLEQFGIKSCILNSELPANSRQHIVEEFNKNVYQLLIATDDTEYIKEEDEDLESEKTEDGLVEVVDDSTVTTKDNAKKQKKPKLNVEKDKEYGVSRGVDFKNVACVLNFDLPTTAKSYVHRIGRTARAGKSGISISFVVPLKEFGKHKPSMIKSAKKDEKILGRIIKQQAKLGFELQPYNFDIKQVEGFRYRMEDGFRAVTQVAIREARIKELKQELLASEKLKRHFEENPHDLESLRHDKELHPARVQQHLKRVPDYLLPETARKDNKKIGFVPFHKNSHRKNGRVVKKKGNVQRKGKSDPLKSFK.

Residues 15–43 (SSFDSFHLDSRLSQAIRSIGFKHPTLIQS) carry the Q motif motif. The region spanning 47-229 (PLALQEKRDI…QQFCRSPAIL (183 aa)) is the Helicase ATP-binding domain. 60–67 (ASTGSGKT) contacts ATP. The DEAD box signature appears at 175–178 (DEVD). A Helicase C-terminal domain is found at 242–474 (KLIQYYVKVG…PYNFDIKQVE (233 aa)). Residues 562–594 (PFHKNSHRKNGRVVKKKGNVQRKGKSDPLKSFK) form a disordered region. The span at 565 to 584 (KNSHRKNGRVVKKKGNVQRK) shows a compositional bias: basic residues. The span at 585–594 (GKSDPLKSFK) shows a compositional bias: basic and acidic residues.

The protein belongs to the DEAD box helicase family. DDX56/DBP9 subfamily.

The protein resides in the nucleus. It localises to the nucleolus. The enzyme catalyses ATP + H2O = ADP + phosphate + H(+). ATP-binding RNA helicase involved in the biogenesis of 60S ribosomal subunits and is required for the normal formation of 25S and 5.8S rRNAs. The polypeptide is ATP-dependent RNA helicase DBP9 (DBP9) (Kluyveromyces lactis (strain ATCC 8585 / CBS 2359 / DSM 70799 / NBRC 1267 / NRRL Y-1140 / WM37) (Yeast)).